A 306-amino-acid chain; its full sequence is Porphobilinogen deaminase (306 aa).

The residue at position 244 (C244) is an S-(dipyrrolylmethanemethyl)cysteine.

The protein belongs to the HMBS family. Monomer. Dipyrromethane serves as cofactor.

It catalyses the reaction 4 porphobilinogen + H2O = hydroxymethylbilane + 4 NH4(+). The protein operates within porphyrin-containing compound metabolism; protoporphyrin-IX biosynthesis; coproporphyrinogen-III from 5-aminolevulinate: step 2/4. In terms of biological role, tetrapolymerization of the monopyrrole PBG into the hydroxymethylbilane pre-uroporphyrinogen in several discrete steps. The polypeptide is Porphobilinogen deaminase (Streptococcus sanguinis (strain SK36)).